Here is a 65-residue protein sequence, read N- to C-terminus: Large ribosomal subunit protein bL35 (65 aa).

Belongs to the bacterial ribosomal protein bL35 family.

This chain is Large ribosomal subunit protein bL35, found in Acaryochloris marina (strain MBIC 11017).